The following is a 70-amino-acid chain: Bowman-Birk type proteinase inhibitor A7 (70 aa).

Cystine bridges form between Cys12–Cys31, Cys18–Cys29, Cys38–Cys45, and Cys42–Cys59.

This sequence belongs to the Bowman-Birk serine protease inhibitor family. In terms of tissue distribution, expressed in bulb (at protein level).

In terms of biological role, serine protease inhibitor. Strongly inhibits trypsin (Ki = 7.1 nM) and almost completely inhibits elastase. Also inhibits chymotrypsin (Ki = 19 nM). Does not inhibit bacterial subtilisin. The chain is Bowman-Birk type proteinase inhibitor A7 from Hyacinthus orientalis (Common hyacinth).